A 172-amino-acid chain; its full sequence is Galectin-related protein (172 aa).

Position 2 is an N-acetylalanine (alanine 2). Serine 22 and serine 25 each carry phosphoserine. Residues 39–168 (PFCGHIKGGM…TIKINGDLQI (130 aa)) form the Galectin domain.

Monomer.

Does not bind lactose, and may not bind carbohydrates. The sequence is that of Galectin-related protein (LGALSL) from Homo sapiens (Human).